The primary structure comprises 352 residues: Protein-glutamate methylesterase/protein-glutamine glutaminase 2 (352 aa).

Residues 1 to 116 (MVVDDSAVVR…KQFLTDSADE (116 aa)) enclose the Response regulatory domain. Aspartate 50 is modified (4-aspartylphosphate). Residues 162–352 (AQTTERIVAI…MAREIVTQLQ (191 aa)) form the CheB-type methylesterase domain. Active-site residues include serine 174, histidine 200, and aspartate 296.

This sequence belongs to the CheB family. Post-translationally, phosphorylated by CheA. Phosphorylation of the N-terminal regulatory domain activates the methylesterase activity.

The protein resides in the cytoplasm. The enzyme catalyses [protein]-L-glutamate 5-O-methyl ester + H2O = L-glutamyl-[protein] + methanol + H(+). The catalysed reaction is L-glutaminyl-[protein] + H2O = L-glutamyl-[protein] + NH4(+). Functionally, involved in chemotaxis. Part of a chemotaxis signal transduction system that modulates chemotaxis in response to various stimuli. Catalyzes the demethylation of specific methylglutamate residues introduced into the chemoreceptors (methyl-accepting chemotaxis proteins or MCP) by CheR. Also mediates the irreversible deamidation of specific glutamine residues to glutamic acid. This chain is Protein-glutamate methylesterase/protein-glutamine glutaminase 2, found in Xanthomonas axonopodis pv. citri (strain 306).